Consider the following 344-residue polypeptide: Thioredoxin reductase FGSG_00043 (344 aa).

Residues 12–15 (GGPA), 34–39 (DSVSYR), His51, and Ala121 contribute to the FAD site. Cys165 and Cys168 are disulfide-bonded. FAD-binding positions include Asp314 and 321–322 (FV).

The protein belongs to the class-II pyridine nucleotide-disulfide oxidoreductase family. In terms of assembly, homodimer. It depends on FAD as a cofactor.

The protein operates within mycotoxin biosynthesis. Thioredoxin reductase; part of the gene cluster that mediates the biosynthesis of gramillins A and B, bicyclic lipopeptides that induce cell death in maize leaves but not in wheat leaves. The nonribosomal peptide synthetase GRA1 incorporates respectively a glutamic adic (Glu), a leucine (Leu), a serine (Ser), a hydroxyglutamine (HOGln), a 2-amino decanoic acid, and 2 cysteins (CysB and CysA). The biosynthesis of 2-amino decanoic acid incorporated in gramillins could be initiated by a fatty acid synthase composed of the alpha and beta subunits FGSG_00036 and FGSG_11656. The cytochrome P450 monooxygenase FGSG_15680 could hydroxylate the fatty acid chain. Subsequent oxidation to the ketone by the oxidoreductase FGSG_00048 and transamination by aminotransferase FGSG_00049 could form 2-amino-decanoic acid. On the other hand, FGSG_15680 could also be responsible for the HO-modified glutamine at the gamma-position. Whether hydroxylation occurs on the fully assembled product or on the Gln residue prior to assembly into the gramillins requires further proof. The thioredoxin FGSG_00043 could also be required for the disulfide-bond formation between CysA and CysB. The specific involvement of the remaining proteins from the cluster is more difficult to discern, but could have broader regulatory (FGSG_00040 and FGSG_11657) or enzymatic functions (FGSG_00044 and FGSG_00045). The final C-domain of GRA1 does not possess the expected sequence of a termination CT domain, often implicated in macrocyclization and release of a cyclopeptidein fungal NRPs; and the thioesterase FGSG_00047 may act in concert with the terminal C-domain of GRA1 to catalyze the formation of the macrocyclic anhydride and release of the products. The chain is Thioredoxin reductase FGSG_00043 from Gibberella zeae (strain ATCC MYA-4620 / CBS 123657 / FGSC 9075 / NRRL 31084 / PH-1) (Wheat head blight fungus).